The primary structure comprises 239 residues: Enolase-phosphatase E1 (239 aa).

Belongs to the HAD-like hydrolase superfamily. MasA/MtnC family. Monomer. Mg(2+) is required as a cofactor.

The catalysed reaction is 5-methylsulfanyl-2,3-dioxopentyl phosphate + H2O = 1,2-dihydroxy-5-(methylsulfanyl)pent-1-en-3-one + phosphate. It functions in the pathway amino-acid biosynthesis; L-methionine biosynthesis via salvage pathway; L-methionine from S-methyl-5-thio-alpha-D-ribose 1-phosphate: step 3/6. The protein operates within amino-acid biosynthesis; L-methionine biosynthesis via salvage pathway; L-methionine from S-methyl-5-thio-alpha-D-ribose 1-phosphate: step 4/6. Functionally, bifunctional enzyme that catalyzes the enolization of 2,3-diketo-5-methylthiopentyl-1-phosphate (DK-MTP-1-P) into the intermediate 2-hydroxy-3-keto-5-methylthiopentenyl-1-phosphate (HK-MTPenyl-1-P), which is then dephosphorylated to form the acireductone 1,2-dihydroxy-3-keto-5-methylthiopentene (DHK-MTPene). This is Enolase-phosphatase E1 from Streptomyces avermitilis (strain ATCC 31267 / DSM 46492 / JCM 5070 / NBRC 14893 / NCIMB 12804 / NRRL 8165 / MA-4680).